Consider the following 374-residue polypeptide: Nudix hydrolase 20, chloroplastic (374 aa).

The transit peptide at 1 to 49 (MASGFCSLALTVTTSLFSSHAITRRVLPILRWRSSSMSLSPLRHSRALS) directs the protein to the chloroplast. The region spanning 205–346 (GYGVHMNGYV…KANCSLVIID (142 aa)) is the Nudix hydrolase domain. Residues 244 to 265 (GGLPHGISCGGNLVKECEEEAG) carry the Nudix box motif. Residues Glu259 and Glu263 each contribute to the Mg(2+) site.

This sequence belongs to the Nudix hydrolase family. It depends on Mg(2+) as a cofactor. The cofactor is Mn(2+). Expressed in leaves and inflorescences.

The protein resides in the plastid. Its subcellular location is the chloroplast. In terms of biological role, probably mediates the hydrolysis of some nucleoside diphosphate derivatives. This chain is Nudix hydrolase 20, chloroplastic (NUDT20), found in Arabidopsis thaliana (Mouse-ear cress).